Reading from the N-terminus, the 1651-residue chain is Alsin (1651 aa).

3 RCC1 repeats span residues 59–108 (DGEV…AVTE), 109–167 (SGVV…ALSL), and 169–218 (REIW…ALVQ). The interval 425 to 462 (ETAAQSGSASTGPESLKDLREEQVKQESLQGKKSSSLM) is disordered. Residues 427–437 (AAQSGSASTGP) are compositionally biased toward polar residues. Over residues 439 to 449 (SLKDLREEQVK) the composition is skewed to basic and acidic residues. Residues 450–461 (QESLQGKKSSSL) show a composition bias toward polar residues. Phosphoserine occurs at positions 459, 460, 477, and 486. Position 504 is a phosphothreonine (Thr-504). RCC1 repeat units follow at residues 519 to 570 (RTEV…ALTA) and 572 to 621 (SQVY…FLVD). An N6-acetyllysine modification is found at Lys-527. Residues 684–879 (GYIASLHELA…ESLALHLGKK (196 aa)) enclose the DH domain. Residues 895 to 1001 (GKMTDSLRKP…RAISQAVDQA (107 aa)) enclose the PH domain. MORN repeat units lie at residues 1043–1065 (YDGR…DGKM), 1066–1088 (YSGM…NKAL), 1094–1116 (YVGH…SGEV), 1117–1139 (FEGC…KLTS), 1145–1167 (FIGQ…TRGE), 1169–1191 (YMGM…FGLY), 1192–1214 (YEGN…DDTI), and 1215–1238 (YEGE…HGDY). A Phosphoserine modification is found at Ser-1329. Positions 1507–1651 (KQPDIALLGF…YFQIQREKLN (145 aa)) constitute a VPS9 domain.

Forms a heteromeric complex with ALS2CL. Interacts with ALS2CL.

Functionally, may act as a GTPase regulator. Controls survival and growth of spinal motoneurons. The sequence is that of Alsin (Als2) from Mus musculus (Mouse).